The following is a 120-amino-acid chain: UPF0344 protein LMHCC_0278 (120 aa).

Transmembrane regions (helical) follow at residues 3–23, 33–53, 62–82, and 92–112; these read GYIHLISWVAIVVLTVTALLI, MLQMINRVFYILVILSGIMMV, ILAIFKILMGIIVIGVVEMLL, and GMFLMIFVIVVVITISLGFYL.

Belongs to the UPF0344 family.

It is found in the cell membrane. This is UPF0344 protein LMHCC_0278 from Listeria monocytogenes serotype 4a (strain HCC23).